The chain runs to 665 residues: Phosphatidylinositol-3-phosphate phosphatase MTMR1 (665 aa).

Residue Met-1 is modified to N-acetylmethionine. Positions 1 to 11 (MDRPAAAAAAG) are enriched in low complexity. The tract at residues 1–51 (MDRPAAAAAAGCEGGGGPNPGPAGGRRPPRAAGGATAGSRQPSVETLDSPT) is disordered. Residues 12–24 (CEGGGGPNPGPAG) are compositionally biased toward gly residues. Residues 39–51 (SRQPSVETLDSPT) show a composition bias toward polar residues. Ser-43 and Ser-49 each carry phosphoserine. A GRAM domain is found at 90 to 161 (NKLAQMEEAP…GVISRVEKIG (72 aa)). Residues 226–601 (GWKVYDPVSE…SHLELWVNYY (376 aa)) enclose the Myotubularin phosphatase domain. Residues Asn-351, Asn-376, and Ile-377 each contribute to the a 1,2-diacyl-sn-glycero-3-phospho-(1D-myo-inositol-3-phosphate) site. Cys-438 serves as the catalytic Phosphocysteine intermediate. A 1,2-diacyl-sn-glycero-3-phospho-(1D-myo-inositol-3-phosphate) is bound by residues Ser-439, Asp-440, Gly-441, Trp-442, Asp-443, Arg-444, and Arg-484. Residue Ser-439 coordinates phosphate. The phosphate site is built by Gly-441, Trp-442, Asp-443, and Arg-444. The segment at 608–665 (MRPQMPIHQNLKELLAVRAELQKRVEGLQREVATRAVSSSSERGSSPSHSATSVHTSV) is required for dimerization. The tract at residues 642-665 (RAVSSSSERGSSPSHSATSVHTSV) is disordered. The span at 645 to 657 (SSSSERGSSPSHS) shows a compositional bias: low complexity.

It belongs to the protein-tyrosine phosphatase family. Non-receptor class myotubularin subfamily. As to quaternary structure, homodimer.

It is found in the cell membrane. It localises to the cytoplasm. The enzyme catalyses a 1,2-diacyl-sn-glycero-3-phospho-(1D-myo-inositol-3-phosphate) + H2O = a 1,2-diacyl-sn-glycero-3-phospho-(1D-myo-inositol) + phosphate. It carries out the reaction 1,2-dioctanoyl-sn-glycero-3-phospho-(1-D-myo-inositol-3-phosphate) + H2O = 1,2-dioctanoyl-sn-glycero-3-phospho-(1D-myo-inositol) + phosphate. It catalyses the reaction a 1,2-diacyl-sn-glycero-3-phospho-(1D-myo-inositol-3,5-bisphosphate) + H2O = a 1,2-diacyl-sn-glycero-3-phospho-(1D-myo-inositol-5-phosphate) + phosphate. Its function is as follows. Lipid phosphatase that specifically dephosphorylates the D-3 position of phosphatidylinositol 3-phosphate, generating phosphatidylinositol. Could also dephosphorylate phosphatidylinositol 3,5-bisphosphate to produce phosphatidylinositol 5-phosphate. This is Phosphatidylinositol-3-phosphate phosphatase MTMR1 from Homo sapiens (Human).